Consider the following 257-residue polypeptide: Hydroxypyruvate/pyruvate aldolase (257 aa).

His-48 functions as the Proton acceptor in the catalytic mechanism. Residues Glu-152 and Asp-178 each coordinate a divalent metal cation.

Belongs to the HpcH/HpaI aldolase family. A divalent metal cation is required as a cofactor.

It catalyses the reaction D-glyceraldehyde + 3-hydroxypyruvate = 2-dehydro-D-gluconate. It carries out the reaction D-glyceraldehyde + pyruvate = 2-dehydro-3-deoxy-L-galactonate. The catalysed reaction is 2-dehydro-3-deoxy-D-gluconate = D-glyceraldehyde + pyruvate. Functionally, aldolase which can catalyze in vitro the aldolisation reaction between hydroxypyruvate (HPA) or pyruvate (PA) and D-glyceraldehyde (D-GA). The condensation of hydroxypyruvate and D-glyceraldehyde produces 2-dehydro-D-gluconate as the major product. The condensation of pyruvate and D-glyceraldehyde produces 2-dehydro-3-deoxy-L-galactonate as the major product and 2-dehydro-3-deoxy-D-gluconate. In Roseovarius nubinhibens (strain ATCC BAA-591 / DSM 15170 / ISM), this protein is Hydroxypyruvate/pyruvate aldolase.